Here is a 359-residue protein sequence, read N- to C-terminus: Peroxisome assembly protein 12 (359 aa).

At 1–19 (MAEHGAHITTASVADDQPS) the chain is on the peroxisomal matrix side. A helical membrane pass occupies residues 20–47 (IFEVVAQDSLMTAVRPALQHVVKVLAES). At 48–51 (NPAH) the chain is on the cytoplasmic side. Residues 52 to 76 (YGFFWRWFDEIFTLLDFLLQQHYLS) form a helical membrane-spanning segment. Residues 77–109 (RTSASFSEHFYGLKRIVAGSSPQLQRPASAGLP) are Peroxisomal matrix-facing. The helical transmembrane segment at 110-139 (KEHLWKSAMFLVLLPYLKVKLEKLASTLRE) threads the bilayer. Residues 140–144 (EDEYS) lie on the Cytoplasmic side of the membrane. The chain crosses the membrane as a helical span at residues 145 to 183 (IHPPSSHWKRFYRVFLAAYPFVTMTWEGWFLTQQLRYIL). At 184–249 (GKAEHHSPLL…VGGVALSLST (66 aa)) the chain is on the peroxisomal matrix side. A helical transmembrane segment spans residues 250–277 (GLSVGVFFLQFLDWWYSSENQETIKSLT). Residues 278–359 (ALPTPPPPVH…HLIKLYSPEN (82 aa)) lie on the Cytoplasmic side of the membrane. Zn(2+) contacts are provided by cysteine 304, cysteine 307, cysteine 325, and cysteine 328. An RING-type; degenerate zinc finger spans residues 304 to 343 (CPLCRKARVNDTVLATSGYVFCYRCVFNYVRSHQACPITG).

Belongs to the pex2/pex10/pex12 family. Component of the PEX2-PEX10-PEX12 retrotranslocation channel, composed of PEX2, PEX10 and PEX12. Interacts with PEX19 via its cytoplasmic domain.

It is found in the peroxisome membrane. The protein operates within protein modification; protein ubiquitination. Component of a retrotranslocation channel required for peroxisome organization by mediating export of the PEX5 receptor from peroxisomes to the cytosol, thereby promoting PEX5 recycling. The retrotranslocation channel is composed of PEX2, PEX10 and PEX12; each subunit contributing transmembrane segments that coassemble into an open channel that specifically allows the passage of PEX5 through the peroxisomal membrane. PEX12 also regulates PEX5 recycling by activating the E3 ubiquitin-protein ligase activity of PEX10. When PEX5 recycling is compromised, PEX12 stimulates PEX10-mediated polyubiquitination of PEX5, leading to its subsequent degradation. The sequence is that of Peroxisome assembly protein 12 (Pex12) from Rattus norvegicus (Rat).